The sequence spans 372 residues: Cytochrome b (372 aa).

A run of 4 helical transmembrane segments spans residues 25 to 45, 69 to 90, 105 to 125, and 170 to 190; these read FGSM…FLAI, WTMQ…YIHI, WLSG…GYVL, and FFAL…IHII. Heme b is bound by residues His-75 and His-89. Heme b-binding residues include His-174 and His-188. His-193 is a binding site for a ubiquinone. Transmembrane regions (helical) follow at residues 218 to 238, 280 to 300, 312 to 332, and 339 to 358; these read YKDM…LSFS, LGGT…PFTH, LTQI…WTAT, and FIII…IMNP.

This sequence belongs to the cytochrome b family. In terms of assembly, the cytochrome bc1 complex contains 3 respiratory subunits (MT-CYB, CYC1 and UQCRFS1), 2 core proteins (UQCRC1 and UQCRC2) and probably 6 low-molecular weight proteins. Heme b is required as a cofactor.

Its subcellular location is the mitochondrion inner membrane. Component of the ubiquinol-cytochrome c reductase complex (complex III or cytochrome b-c1 complex) that is part of the mitochondrial respiratory chain. The b-c1 complex mediates electron transfer from ubiquinol to cytochrome c. Contributes to the generation of a proton gradient across the mitochondrial membrane that is then used for ATP synthesis. This Ophiophagus hannah (King cobra) protein is Cytochrome b (MT-CYB).